The chain runs to 933 residues: Serine/threonine-protein kinase EDR1 (933 aa).

Residues 1-10 (MKHIFKKLHR) show a composition bias toward basic residues. Disordered regions lie at residues 1-74 (MKHI…ADYM), 342-424 (CNSN…TAIG), 527-550 (HRDP…AISS), and 604-650 (HGQQ…YRND). The segment covering 37-48 (NPPQATPSSVTE) has biased composition (polar residues). Residues 53-68 (AGATSSMASPAPTAAS) show a composition bias toward low complexity. The span at 342-356 (CNSNGNKFPTAQFSN) shows a compositional bias: polar residues. Residues 367–378 (SSHSSMANYSSS) are compositionally biased toward low complexity. Residues 379 to 389 (LDRRTEAERTD) show a composition bias toward basic and acidic residues. The span at 404-413 (SSPSSVTSST) shows a compositional bias: low complexity. Polar residues predominate over residues 533–550 (GNTQSSYATSSSNGAISS). Residues 607-621 (QNDESHIHDHRKYTS) are compositionally biased toward basic and acidic residues. The Protein kinase domain maps to 669-925 (LVIAERIGLG…QLTEVLKPLN (257 aa)). ATP is bound by residues 675–683 (IGLGSYGEV) and Lys-696. Residue Asp-792 is the Proton acceptor of the active site.

Belongs to the protein kinase superfamily. TKL Ser/Thr protein kinase family. RAF subfamily. In terms of assembly, interacts with KEG. Binds and recruited by EDR4 at the powdery mildew (e.g. G.cichoracearum) penetration site on the plasma membrane. Post-translationally, autophosphorylated.

The protein localises to the cell membrane. The protein resides in the endosome. It localises to the nucleus. Its subcellular location is the endoplasmic reticulum. It is found in the golgi apparatus. The protein localises to the trans-Golgi network. The protein resides in the early endosome. The enzyme catalyses L-seryl-[protein] + ATP = O-phospho-L-seryl-[protein] + ADP + H(+). The catalysed reaction is L-threonyl-[protein] + ATP = O-phospho-L-threonyl-[protein] + ADP + H(+). In terms of biological role, MAPKKK serine/threonine-protein kinase involved in the regulation of a MAP kinase cascade (probably including MPK3 and MPK6) that negatively regulates salicylic acid- (SA-) dependent defense responses, abscisic acid (ABA) signaling, and ethylene-induced senescence. Also modulates stress response (e.g. drought) signaling and cell death, in an ORE9-dependent manner. Functions at a point of cross talk between ethylene, ABA and SA signaling that impinges on senescence and cell death. On the other hand, it confers sensitivity to various pathogens such as the fungus E.cichoracearum, the oomycete H.parasitica and the bacteria P.syringae pv. tomato DC3000. Required for resistance to some hemibiotrophic/necrotrophic fungal pathogens (e.g. C.gloeosporioides, C.higginsianum and A.brassicicola) through the induction of defensin expression, probably by repressing MYC2, an inhibitor of defensin genes (PDFs). Together with KEG, may regulate endocytic trafficking and/or the formation of signaling complexes on trans-Golgi network (TGN)/ early endosome (EE) vesicles during stress responses. This chain is Serine/threonine-protein kinase EDR1 (EDR1), found in Arabidopsis thaliana (Mouse-ear cress).